Reading from the N-terminus, the 388-residue chain is Succinyl-diaminopimelate desuccinylase (388 aa).

His-74 contacts Zn(2+). Asp-76 is an active-site residue. Asp-107 contacts Zn(2+). Residue Glu-142 is the Proton acceptor of the active site. The Zn(2+) site is built by Glu-143, Glu-171, and His-360.

It belongs to the peptidase M20A family. DapE subfamily. Homodimer. The cofactor is Zn(2+). Requires Co(2+) as cofactor.

The catalysed reaction is N-succinyl-(2S,6S)-2,6-diaminopimelate + H2O = (2S,6S)-2,6-diaminopimelate + succinate. The protein operates within amino-acid biosynthesis; L-lysine biosynthesis via DAP pathway; LL-2,6-diaminopimelate from (S)-tetrahydrodipicolinate (succinylase route): step 3/3. Catalyzes the hydrolysis of N-succinyl-L,L-diaminopimelic acid (SDAP), forming succinate and LL-2,6-diaminopimelate (DAP), an intermediate involved in the bacterial biosynthesis of lysine and meso-diaminopimelic acid, an essential component of bacterial cell walls. The protein is Succinyl-diaminopimelate desuccinylase of Rhodopseudomonas palustris (strain BisB5).